The primary structure comprises 2262 residues: Klarsicht protein (2262 aa).

Disordered stretches follow at residues 1-140 (MEMQ…VGND), 345-410 (QQQQ…GEGN), 442-475 (AANG…LNEV), 514-561 (QSQS…PDIG), 800-832 (ATSS…DKEN), 859-898 (SNYD…QLQM), 1000-1031 (HLPP…VSPV), 1115-1157 (PSCK…SEGF), 1246-1316 (SGLA…ELGG), and 1533-1670 (VRRK…QQSR). A required for apical microtubules localization region spans residues 1–1774 (MEMQQENETG…KPTPELLDTE (1774 aa)). The Cytoplasmic segment spans residues 1 to 2215 (MEMQQENETG…KRGWAWRIAR (2215 aa)). Positions 58–67 (KIEHTTKPLK) are enriched in basic and acidic residues. Residues 131–140 (NYGTNSVGND) show a composition bias toward polar residues. Low complexity predominate over residues 345–402 (QQQQLSSQQPASLTSNCSSESTSESATKSSSLSSGFASDPVTTPIGTAAAAPPSSSTH). The span at 446 to 475 (LDDDEDEEEDTEDDSFGYEGEATEDDLNEV) shows a compositional bias: acidic residues. Residues 514 to 525 (QSQSRSQQVPSQ) are compositionally biased toward low complexity. Over residues 546-560 (EADEELEEEDEDPDI) the composition is skewed to acidic residues. 2 stretches are compositionally biased toward low complexity: residues 809-818 (STAVSSTTAT) and 859-881 (SNYD…SNSN). Positions 882 to 894 (GRLTETSATSRVT) are enriched in polar residues. The segment covering 1006–1018 (PAKSAKSTKSQAS) has biased composition (low complexity). The span at 1019 to 1028 (NATVSGSTLV) shows a compositional bias: polar residues. A compositionally biased stretch (polar residues) spans 1246-1259 (SGLASHSISESALD). Low complexity predominate over residues 1267 to 1280 (PRAASSSGTGSNAA). The segment covering 1288-1299 (SLRRRKARKKRI) has biased composition (basic residues). Positions 1550-1559 (QSDQQQQQLQ) are enriched in low complexity. Residues 1560–1583 (VTPSLSASATALMTTPKNQSTSHQ) show a composition bias toward polar residues. Basic and acidic residues-rich tracts occupy residues 1586 to 1596 (HRAESVGRKLD) and 1610 to 1640 (RTSE…EKCI). Positions 1809–1842 (LTKQERRLQSALEEQEQQQESEQLKQQKLVEEEK) form a coiled coil. Residues 2092-2205 (HQQKQQIQQN…GEGADPAQTS (114 aa)) are disordered. The segment covering 2093–2105 (QQKQQIQQNQTQQ) has biased composition (low complexity). Positions 2130–2142 (RRGKGARKARQAK) are enriched in basic residues. The KASH domain maps to 2207-2262 (RGWAWRIARAAVPMQVALFTIFCAACLMQPNCCDNLNNLSMSFTPQLRYIRGPPPI). Residues 2216-2236 (AAVPMQVALFTIFCAACLMQP) traverse the membrane as a helical; Anchor for type IV membrane protein segment. Topologically, residues 2237 to 2262 (NCCDNLNNLSMSFTPQLRYIRGPPPI) are perinuclear space.

It belongs to the nesprin family. In terms of assembly, core component of LINC complexes which are composed of inner nuclear membrane SUN domain-containing proteins coupled to outer nuclear membrane KASH domain-containing nesprins. Interacts with kud. Interacts with Msp300; this interaction allows the anchoring of Msp300 nuclear ring structure to the nuclear envelope. In terms of tissue distribution, expressed ubiquitously in the eye disk, but at much higher levels posterior to the morphogenetic furrow. Expressed in R-cells and also in non-neural cone cells.

The protein resides in the cytoplasm. It localises to the cytoskeleton. Its subcellular location is the microtubule organizing center. It is found in the perinuclear region. The protein localises to the nucleus membrane. The protein resides in the nucleus envelope. Functionally, component of the LINC (LInker of Nucleoskeleton and Cytoskeleton) complex involved in the connection between the nuclear lamina and the cytoskeleton. Plays a role in the nuclear positioning and links the nucleus to the microtubule organizing center (MTOC). Collaborates with Klar to promote even spacing of the myonuclei at the periphery of striated muscle fibers by mediating a tight association between a nuclear ring structure of Msp300 and the plus ends of a unique astral microtubule (MT) network. The sequence is that of Klarsicht protein from Drosophila melanogaster (Fruit fly).